The primary structure comprises 178 residues: Protein GrpE (178 aa).

It belongs to the GrpE family. As to quaternary structure, homodimer.

It is found in the cytoplasm. Functionally, participates actively in the response to hyperosmotic and heat shock by preventing the aggregation of stress-denatured proteins, in association with DnaK and GrpE. It is the nucleotide exchange factor for DnaK and may function as a thermosensor. Unfolded proteins bind initially to DnaJ; upon interaction with the DnaJ-bound protein, DnaK hydrolyzes its bound ATP, resulting in the formation of a stable complex. GrpE releases ADP from DnaK; ATP binding to DnaK triggers the release of the substrate protein, thus completing the reaction cycle. Several rounds of ATP-dependent interactions between DnaJ, DnaK and GrpE are required for fully efficient folding. The chain is Protein GrpE from Rickettsia akari (strain Hartford).